Here is a 448-residue protein sequence, read N- to C-terminus: Probable glycine dehydrogenase (decarboxylating) subunit 1 (448 aa).

It belongs to the GcvP family. N-terminal subunit subfamily. The glycine cleavage system is composed of four proteins: P, T, L and H. In this organism, the P 'protein' is a heterodimer of two subunits.

The catalysed reaction is N(6)-[(R)-lipoyl]-L-lysyl-[glycine-cleavage complex H protein] + glycine + H(+) = N(6)-[(R)-S(8)-aminomethyldihydrolipoyl]-L-lysyl-[glycine-cleavage complex H protein] + CO2. The glycine cleavage system catalyzes the degradation of glycine. The P protein binds the alpha-amino group of glycine through its pyridoxal phosphate cofactor; CO(2) is released and the remaining methylamine moiety is then transferred to the lipoamide cofactor of the H protein. This is Probable glycine dehydrogenase (decarboxylating) subunit 1 from Rhodospirillum rubrum (strain ATCC 11170 / ATH 1.1.1 / DSM 467 / LMG 4362 / NCIMB 8255 / S1).